We begin with the raw amino-acid sequence, 480 residues long: Vinorine hydroxylase (480 aa).

The chain crosses the membrane as a helical span at residues Leu-3–Trp-23. Cys-418 serves as a coordination point for heme.

The protein belongs to the cytochrome P450 family. Heme serves as cofactor. In terms of tissue distribution, mainly expressed in roots and, to a lesser extent, in leaves.

Its subcellular location is the membrane. The enzyme catalyses vinorine + reduced [NADPH--hemoprotein reductase] + O2 = vomilenine + oxidized [NADPH--hemoprotein reductase] + H2O + H(+). The catalysed reaction is vomilenine = perakine. Its pathway is alkaloid biosynthesis; ajmaline biosynthesis. Its function is as follows. A cytochrome P450 monooxygenase involved in the biosynthesis of ajmaline-type monoterpenoid indole alkaloids (MIAs) natural products, important plant-derived pharmaceuticals used in the therapy of heart disorders. Catalyzes the hydroxylation of vinorine to vomilenine, an intermediate chemical in the biosynthesis of ajmaline. Supports also vomilenine isomerization to perakine. This Rauvolfia serpentina (Serpentine wood) protein is Vinorine hydroxylase.